We begin with the raw amino-acid sequence, 320 residues long: L-lactate dehydrogenase (320 aa).

NAD(+)-binding positions include Val19, Asp40, Arg45, and 85-86 (GA). Positions 88 and 94 each coordinate substrate. NAD(+)-binding positions include Ser107, 124–126 (ITN), and Ser149. Residue 126 to 129 (NPVD) coordinates substrate. 154-157 (DSAR) is a binding site for substrate. The beta-D-fructose 1,6-bisphosphate site is built by Arg159 and His174. His181 functions as the Proton acceptor in the catalytic mechanism. Residue Tyr228 is modified to Phosphotyrosine. Thr237 is a binding site for substrate.

Belongs to the LDH/MDH superfamily. LDH family. Homotetramer.

The protein resides in the cytoplasm. It carries out the reaction (S)-lactate + NAD(+) = pyruvate + NADH + H(+). It participates in fermentation; pyruvate fermentation to lactate; (S)-lactate from pyruvate: step 1/1. Allosterically activated by fructose 1,6-bisphosphate (FBP). In terms of biological role, catalyzes the conversion of lactate to pyruvate. This is L-lactate dehydrogenase from Bifidobacterium animalis subsp. lactis (strain AD011).